The sequence spans 207 residues: Ras-related protein Rab7A (207 aa).

Residues 15-22 (GDSGVGKT), 63-67 (DTAGQ), and 125-128 (NKID) each bind GTP. Residues cysteine 205 and cysteine 207 are each lipidated (S-geranylgeranyl cysteine). Cysteine 207 carries the post-translational modification Cysteine methyl ester.

This sequence belongs to the small GTPase superfamily. Rab family.

It is found in the cell membrane. Functionally, protein transport. Probably involved in vesicular traffic. The polypeptide is Ras-related protein Rab7A (Mesembryanthemum crystallinum (Common ice plant)).